The following is a 105-amino-acid chain: Heat shock protein HspQ (105 aa).

Residues 77–105 form a disordered region; the sequence is MRDEHPEQPSMDELARTIRKQLQAPRLRN.

It belongs to the HspQ family.

It is found in the cytoplasm. Involved in the degradation of certain denaturated proteins, including DnaA, during heat shock stress. In Salmonella arizonae (strain ATCC BAA-731 / CDC346-86 / RSK2980), this protein is Heat shock protein HspQ.